We begin with the raw amino-acid sequence, 516 residues long: NADH-quinone oxidoreductase subunit N (516 aa).

The next 14 membrane-spanning stretches (helical) occupy residues 12-32 (LLPA…DLLV), 37-57 (VTIS…VLVG), 81-101 (LVAV…GPLL), 108-128 (VGEY…LGAA), 131-151 (LITL…LVGL), 163-183 (VTFF…AALL), 213-233 (VAVA…PFHA), 246-266 (VAAY…LAVV), 274-294 (ITGL…NLVA), 303-323 (LLAW…GALA), 341-361 (VAYT…VVAL), 386-406 (VGLA…AGLF), 419-439 (GAAG…AYYL), and 491-511 (VVLA…QLVL).

This sequence belongs to the complex I subunit 2 family. As to quaternary structure, NDH-1 is composed of 14 different subunits. Subunits NuoA, H, J, K, L, M, N constitute the membrane sector of the complex.

It localises to the cell membrane. The catalysed reaction is a quinone + NADH + 5 H(+)(in) = a quinol + NAD(+) + 4 H(+)(out). Its function is as follows. NDH-1 shuttles electrons from NADH, via FMN and iron-sulfur (Fe-S) centers, to quinones in the respiratory chain. The immediate electron acceptor for the enzyme in this species is believed to be a menaquinone. Couples the redox reaction to proton translocation (for every two electrons transferred, four hydrogen ions are translocated across the cytoplasmic membrane), and thus conserves the redox energy in a proton gradient. This chain is NADH-quinone oxidoreductase subunit N, found in Salinispora tropica (strain ATCC BAA-916 / DSM 44818 / JCM 13857 / NBRC 105044 / CNB-440).